Consider the following 326-residue polypeptide: Aquaporin-3 (326 aa).

The next 2 helical transmembrane spans lie at 24–44 (LAEFLGTFLLVLLLNGMIITA) and 64–84 (LAFGGGLAVMVAVLVSGGISG). The NPA 1 signature appears at 88–90 (NPA). A helical transmembrane segment spans residues 107–127 (LVYIFMQYMGAFFAASILYAV). The N-linked (GlcNAc...) asparagine glycan is linked to Asn146. 2 helical membrane-spanning segments follow: residues 166-186 (IFDAILGTGLLVMGIFAIIDP) and 196-216 (IPLYVGFLISSLIFSFSYNAG). The short motif at 220 to 222 (NPA) is the NPA 2 element. A helical membrane pass occupies residues 247–267 (LWWLVPVIGPHVGGLLGGVTY). N-linked (GlcNAc...) asparagine glycosylation occurs at Asn294.

It belongs to the MIP/aquaporin (TC 1.A.8) family.

It localises to the cell membrane. In terms of biological role, aquaglyceroporin that may modulate the water content and osmolytes during anhydrobiosis. In Milnesium tardigradum (Water bear), this protein is Aquaporin-3.